Here is a 228-residue protein sequence, read N- to C-terminus: L-ribulose-5-phosphate 4-epimerase UlaF (228 aa).

Substrate is bound by residues 26–27, 43–44, and 72–73; these read GN, SG, and SS. Positions 74, 93, and 95 each coordinate Zn(2+). D118 (proton donor/acceptor) is an active-site residue. Position 167 (H167) interacts with Zn(2+). Residue Y225 is the Proton donor/acceptor of the active site.

Belongs to the aldolase class II family. AraD/FucA subfamily. It depends on Zn(2+) as a cofactor.

It carries out the reaction L-ribulose 5-phosphate = D-xylulose 5-phosphate. Its pathway is cofactor degradation; L-ascorbate degradation; D-xylulose 5-phosphate from L-ascorbate: step 4/4. Its function is as follows. Catalyzes the isomerization of L-ribulose 5-phosphate to D-xylulose 5-phosphate. Is involved in the anaerobic L-ascorbate utilization. The protein is L-ribulose-5-phosphate 4-epimerase UlaF of Escherichia coli (strain SE11).